The sequence spans 576 residues: Putative SPbeta prophage-derived single-strand DNA-specific exonuclease YorK (576 aa).

Position 473 is a phosphotyrosine (tyrosine 473).

The protein belongs to the RecJ family.

Its function is as follows. Putative single-stranded-DNA-specific exonuclease. The polypeptide is Putative SPbeta prophage-derived single-strand DNA-specific exonuclease YorK (yorK) (Bacillus subtilis (strain 168)).